The following is a 188-amino-acid chain: dCTP deaminase (188 aa).

DCTP contacts are provided by residues K111–R116, T135–E137, Q156, Y170, and Q180. E137 (proton donor/acceptor) is an active-site residue.

This sequence belongs to the dCTP deaminase family. Homotrimer.

It catalyses the reaction dCTP + H2O + H(+) = dUTP + NH4(+). It functions in the pathway pyrimidine metabolism; dUMP biosynthesis; dUMP from dCTP (dUTP route): step 1/2. Catalyzes the deamination of dCTP to dUTP. This Pseudomonas savastanoi pv. phaseolicola (strain 1448A / Race 6) (Pseudomonas syringae pv. phaseolicola (strain 1448A / Race 6)) protein is dCTP deaminase.